Consider the following 130-residue polypeptide: MSTPRIALIAHDAKKDEIVALAGAYRAALAQCRLVATGTTGGRIAQAHGLDVERKLSGPLGGDLQIGAELADGRVDIVIFLRDPMTAQPHDPDITALVRACDVHDVPVATNVATARVLLDDLARRLPVKA.

Positions 1 to 130 constitute an MGS-like domain; the sequence is MSTPRIALIA…DLARRLPVKA (130 aa). Residues H11, K15, 37-40, and 57-58 each bind substrate; these read TGTT and SG. D63 (proton donor/acceptor) is an active-site residue. H90 is a substrate binding site.

This sequence belongs to the methylglyoxal synthase family.

The enzyme catalyses dihydroxyacetone phosphate = methylglyoxal + phosphate. Catalyzes the formation of methylglyoxal from dihydroxyacetone phosphate. This is Methylglyoxal synthase from Burkholderia thailandensis (strain ATCC 700388 / DSM 13276 / CCUG 48851 / CIP 106301 / E264).